Here is a 652-residue protein sequence, read N- to C-terminus: Phosphatidylinositol-binding clathrin assembly protein (652 aa).

S2 bears the N-acetylserine mark. The 132-residue stretch at 14 to 145 folds into the ENTH domain; sequence QHSVTGSAVS…VSYRQVAFDF (132 aa). Phosphoserine is present on residues S16 and S20. The tract at residues 221 to 294 is interaction with PIMREG; it reads KYFDMKKNQC…LEGKKIKDST (74 aa). K238 participates in a covalent cross-link: Glycyl lysine isopeptide (Lys-Gly) (interchain with G-Cter in SUMO2). Phosphoserine occurs at positions 303 and 315. The tract at residues 559 to 580 is disordered; sequence KNDVNWSQPGEKKLTGGSNWQP.

It belongs to the PICALM/SNAP91 family. In terms of assembly, binds to clathrin; involves primarily the C-terminal sequences, but the full-length protein is required for full binding capacity. Binds phosphatidylinositol 4,5- bisphosphate. Interacts with PIMREG; this interaction may change the subcellular location into the nucleus. Interacts with AP2A1 (via its alpha-appendage domain). Interacts (via N-terminus) with VAMP2; VAMP3; VAMP7 and VAMP8 (Via N-terminus). Interacts with LC3/MAP1LC3A. Expressed in all tissues examined.

It is found in the cell membrane. Its subcellular location is the membrane. The protein resides in the clathrin-coated pit. The protein localises to the golgi apparatus. It localises to the cytoplasmic vesicle. It is found in the clathrin-coated vesicle. Its subcellular location is the nucleus. Functionally, cytoplasmic adapter protein that plays a critical role in clathrin-mediated endocytosis which is important in processes such as internalization of cell receptors, synaptic transmission or removal of apoptotic cells. Recruits AP-2 and attaches clathrin triskelions to the cytoplasmic side of plasma membrane leading to clathrin-coated vesicles (CCVs) assembly. Furthermore, regulates clathrin-coated vesicle size and maturation by directly sensing and driving membrane curvature. In addition to binding to clathrin, mediates the endocytosis of small R-SNARES (Soluble NSF Attachment Protein REceptors) between plasma membranes and endosomes including VAMP2, VAMP3, VAMP4, VAMP7 or VAMP8. In turn, PICALM-dependent SNARE endocytosis is required for the formation and maturation of autophagic precursors. Modulates thereby autophagy and the turnover of autophagy substrates such as MAPT/TAU or amyloid precursor protein cleaved C-terminal fragment (APP-CTF). This is Phosphatidylinositol-binding clathrin assembly protein (PICALM) from Homo sapiens (Human).